A 365-amino-acid chain; its full sequence is Dual-specificity RNA methyltransferase RlmN (365 aa).

E91 acts as the Proton acceptor in catalysis. The Radical SAM core domain maps to 97 to 337; it reads ETSRGTLCIS…TTVRKTRGDD (241 aa). A disulfide bond links C104 and C342. The [4Fe-4S] cluster site is built by C111, C115, and C118. Residues 168–169, S200, 222–224, and N299 contribute to the S-adenosyl-L-methionine site; these read GE and SLH. The S-methylcysteine intermediate role is filled by C342.

The protein belongs to the radical SAM superfamily. RlmN family. It depends on [4Fe-4S] cluster as a cofactor.

Its subcellular location is the cytoplasm. The enzyme catalyses adenosine(2503) in 23S rRNA + 2 reduced [2Fe-2S]-[ferredoxin] + 2 S-adenosyl-L-methionine = 2-methyladenosine(2503) in 23S rRNA + 5'-deoxyadenosine + L-methionine + 2 oxidized [2Fe-2S]-[ferredoxin] + S-adenosyl-L-homocysteine. It carries out the reaction adenosine(37) in tRNA + 2 reduced [2Fe-2S]-[ferredoxin] + 2 S-adenosyl-L-methionine = 2-methyladenosine(37) in tRNA + 5'-deoxyadenosine + L-methionine + 2 oxidized [2Fe-2S]-[ferredoxin] + S-adenosyl-L-homocysteine. Functionally, specifically methylates position 2 of adenine 2503 in 23S rRNA and position 2 of adenine 37 in tRNAs. m2A2503 modification seems to play a crucial role in the proofreading step occurring at the peptidyl transferase center and thus would serve to optimize ribosomal fidelity. The polypeptide is Dual-specificity RNA methyltransferase RlmN (Nitrosospira multiformis (strain ATCC 25196 / NCIMB 11849 / C 71)).